The sequence spans 360 residues: Photosystem II protein D1 (360 aa).

Topologically, residues 1-28 (MTTTLQRRESANLWERFCNWVTSTDNRL) are cytoplasmic. Residues 29–46 (YVGWFGVIMIPTLLAATI) traverse the membrane as a helical segment. The Lumenal segment spans residues 47 to 117 (CFVIAFIAAP…NGGPYQLIIF (71 aa)). Histidine 118 is a binding site for chlorophyll a. A helical transmembrane segment spans residues 118-133 (HFLLGASCYMGRQWEL). Tyrosine 126 and glutamine 130 together coordinate pheophytin a. The Cytoplasmic segment spans residues 134–141 (SYRLGMRP). A helical transmembrane segment spans residues 142–156 (WICVAYSAPLASAFA). A pheophytin a-binding site is contributed by tyrosine 147. Topologically, residues 157–196 (VFLIYPIGQGSFSDGMPLGISGTFNFMIVFQAEHNILMHP) are lumenal. Positions 170 and 189 each coordinate [CaMn4O5] cluster. Residues 197-218 (FHQLGVAGVFGGALFCAMHGSL) traverse the membrane as a helical segment. Residue histidine 198 coordinates chlorophyll a. A pheophytin a-binding site is contributed by methionine 214. Residues histidine 215 and 264–265 (SF) each bind a quinone. Position 215 (histidine 215) interacts with Fe cation. Residues 219–273 (VTSSLIRETTETESANYGYKFGQEEETYNIVAAHGYFGRLIFQYASFNNSRSLHF) are Cytoplasmic-facing. Histidine 272 contributes to the Fe cation binding site. A helical membrane pass occupies residues 274-288 (FLAAWRVVGVWFAAL). The Lumenal portion of the chain corresponds to 289 to 360 (GISTMAFNLN…VAMIAPSING (72 aa)). Positions 332, 333, 342, and 344 each coordinate [CaMn4O5] cluster. Positions 345-360 (SAESAPVAMIAPSING) are excised as a propeptide.

It belongs to the reaction center PufL/M/PsbA/D family. As to quaternary structure, PSII is composed of 1 copy each of membrane proteins PsbA, PsbB, PsbC, PsbD, PsbE, PsbF, PsbH, PsbI, PsbJ, PsbK, PsbL, PsbM, PsbT, PsbX, PsbY, PsbZ, Psb30/Ycf12, peripheral proteins PsbO, CyanoQ (PsbQ), PsbU, PsbV and a large number of cofactors. It forms dimeric complexes. The D1/D2 heterodimer binds P680, chlorophylls that are the primary electron donor of PSII, and subsequent electron acceptors. It shares a non-heme iron and each subunit binds pheophytin, quinone, additional chlorophylls, carotenoids and lipids. D1 provides most of the ligands for the Mn4-Ca-O5 cluster of the oxygen-evolving complex (OEC). There is also a Cl(-1) ion associated with D1 and D2, which is required for oxygen evolution. The PSII complex binds additional chlorophylls, carotenoids and specific lipids. is required as a cofactor. In terms of processing, C-terminally processed by CtpA; processing is essential to allow assembly of the oxygen-evolving complex and thus photosynthetic growth. Tyr-161 forms a radical intermediate that is referred to as redox-active TyrZ, YZ or Y-Z.

Its subcellular location is the cellular thylakoid membrane. The enzyme catalyses 2 a plastoquinone + 4 hnu + 2 H2O = 2 a plastoquinol + O2. Its function is as follows. Photosystem II (PSII) is a light-driven water:plastoquinone oxidoreductase that uses light energy to abstract electrons from H(2)O, generating O(2) and a proton gradient subsequently used for ATP formation. It consists of a core antenna complex that captures photons, and an electron transfer chain that converts photonic excitation into a charge separation. The D1/D2 (PsbA/PsbD) reaction center heterodimer binds P680, the primary electron donor of PSII as well as several subsequent electron acceptors. This Thermostichus vulcanus (Synechococcus vulcanus) protein is Photosystem II protein D1.